Here is a 486-residue protein sequence, read N- to C-terminus: Glutamate--tRNA ligase 2 (486 aa).

The 'HIGH' region signature appears at 12–22; the sequence is PSPTGELHIGN. The short motif at 252–256 is the 'KMSKS' region element; sequence KLSKR. An ATP-binding site is contributed by Lys255.

This sequence belongs to the class-I aminoacyl-tRNA synthetase family. Glutamate--tRNA ligase type 1 subfamily. In terms of assembly, monomer.

The protein resides in the cytoplasm. It carries out the reaction tRNA(Glu) + L-glutamate + ATP = L-glutamyl-tRNA(Glu) + AMP + diphosphate. In terms of biological role, catalyzes the attachment of glutamate to tRNA(Glu) in a two-step reaction: glutamate is first activated by ATP to form Glu-AMP and then transferred to the acceptor end of tRNA(Glu). The protein is Glutamate--tRNA ligase 2 of Syntrophus aciditrophicus (strain SB).